The primary structure comprises 132 residues: Small ribosomal subunit protein uS8 (132 aa).

This sequence belongs to the universal ribosomal protein uS8 family. Part of the 30S ribosomal subunit. Contacts proteins S5 and S12.

Functionally, one of the primary rRNA binding proteins, it binds directly to 16S rRNA central domain where it helps coordinate assembly of the platform of the 30S subunit. This chain is Small ribosomal subunit protein uS8, found in Francisella philomiragia subsp. philomiragia (strain ATCC 25017 / CCUG 19701 / FSC 153 / O#319-036).